Here is a 66-residue protein sequence, read N- to C-terminus: MAFLKKSLFLVLFLGLVSLSICEEEKRETEEEENDQEEDDKSEEKRFLSLLPSLVSGAVSLVKKLG.

The first 22 residues, 1-22, serve as a signal peptide directing secretion; that stretch reads MAFLKKSLFLVLFLGLVSLSIC. A propeptide spanning residues 23-44 is cleaved from the precursor; it reads EEEKRETEEEENDQEEDDKSEE. The interval 25–44 is disordered; that stretch reads EKRETEEEENDQEEDDKSEE. Over residues 30 to 41 the composition is skewed to acidic residues; it reads EEEENDQEEDDK. L65 is subject to Leucine amide.

As to expression, expressed by the skin glands.

Its subcellular location is the secreted. Functionally, has antimicrobial activity. The sequence is that of Phylloseptin-H8 from Pithecopus hypochondrialis (Orange-legged leaf frog).